The following is a 73-amino-acid chain: Tetrahydromethanopterin S-methyltransferase subunit G (73 aa).

The helical transmembrane segment at 48 to 68 (IGILYGAVVGLLLFLIYVSVS) threads the bilayer.

Belongs to the MtrG family. As to quaternary structure, the complex is composed of 8 subunits; MtrA, MtrB, MtrC, MtrD, MtrE, MtrF, MtrG and MtrH.

The protein resides in the cell membrane. It catalyses the reaction 5-methyl-5,6,7,8-tetrahydromethanopterin + coenzyme M + 2 Na(+)(in) = 5,6,7,8-tetrahydromethanopterin + methyl-coenzyme M + 2 Na(+)(out). The protein operates within one-carbon metabolism; methanogenesis from CO(2); methyl-coenzyme M from 5,10-methylene-5,6,7,8-tetrahydromethanopterin: step 2/2. Its function is as follows. Part of a complex that catalyzes the formation of methyl-coenzyme M and tetrahydromethanopterin from coenzyme M and methyl-tetrahydromethanopterin. This is an energy-conserving, sodium-ion translocating step. This is Tetrahydromethanopterin S-methyltransferase subunit G from Methanosarcina acetivorans (strain ATCC 35395 / DSM 2834 / JCM 12185 / C2A).